Here is a 479-residue protein sequence, read N- to C-terminus: Ribulose bisphosphate carboxylase large chain (479 aa).

A propeptide spanning residues 1–2 (MS) is cleaved from the precursor. Asparagine 123 and threonine 173 together coordinate substrate. Residue lysine 175 is the Proton acceptor of the active site. Lysine 177 contacts substrate. Mg(2+) contacts are provided by lysine 201, aspartate 203, and glutamate 204. The residue at position 201 (lysine 201) is an N6-carboxylysine. Serine 208 carries the phosphoserine modification. Catalysis depends on histidine 294, which acts as the Proton acceptor. Residues arginine 295 and histidine 327 each contribute to the substrate site. A Phosphothreonine modification is found at threonine 330. Serine 379 lines the substrate pocket.

Belongs to the RuBisCO large chain family. Type I subfamily. In terms of assembly, heterohexadecamer of 8 large chains and 8 small chains; disulfide-linked. The disulfide link is formed within the large subunit homodimers. Mg(2+) serves as cofactor. In terms of processing, the disulfide bond which can form in the large chain dimeric partners within the hexadecamer appears to be associated with oxidative stress and protein turnover.

The protein localises to the plastid. Its subcellular location is the chloroplast. It carries out the reaction 2 (2R)-3-phosphoglycerate + 2 H(+) = D-ribulose 1,5-bisphosphate + CO2 + H2O. It catalyses the reaction D-ribulose 1,5-bisphosphate + O2 = 2-phosphoglycolate + (2R)-3-phosphoglycerate + 2 H(+). In terms of biological role, ruBisCO catalyzes two reactions: the carboxylation of D-ribulose 1,5-bisphosphate, the primary event in carbon dioxide fixation, as well as the oxidative fragmentation of the pentose substrate in the photorespiration process. Both reactions occur simultaneously and in competition at the same active site. This is Ribulose bisphosphate carboxylase large chain from Crucihimalaya wallichii (Rock-cress).